We begin with the raw amino-acid sequence, 371 residues long: Glycosyltransferase 8 domain-containing protein 1 (371 aa).

Over 1-7 (MSFRKVN) the chain is Cytoplasmic. A helical; Signal-anchor for type II membrane protein membrane pass occupies residues 8–28 (IIILVLAVALFLLVLHHNFLS). The Lumenal portion of the chain corresponds to 29-371 (LSSLLRNEVT…RRYTEISNIK (343 aa)). N-linked (GlcNAc...) asparagine glycans are attached at residues N249 and N257.

Belongs to the glycosyltransferase 8 family.

The protein resides in the membrane. The protein is Glycosyltransferase 8 domain-containing protein 1 (GLT8D1) of Homo sapiens (Human).